A 353-amino-acid chain; its full sequence is Guanine nucleotide-binding protein subunit alpha (353 aa).

The segment at 1–25 (MGCGMSTEDKEGKARNEEIENQLKR) is disordered. The N-myristoyl glycine moiety is linked to residue glycine 2. Cysteine 3 is lipidated: S-palmitoyl cysteine. Residues 7–25 (TEDKEGKARNEEIENQLKR) are compositionally biased toward basic and acidic residues. The G-alpha domain occupies 32 to 353 (NEIKMLLLGA…QENLRLCGLI (322 aa)). Residues 35–48 (KMLLLGAGESGKST) are G1 motif. 14 residues coordinate GTP: glutamate 43, serine 44, glycine 45, lysine 46, serine 47, threonine 48, aspartate 150, leucine 175, threonine 181, glycine 203, asparagine 269, lysine 270, aspartate 272, and alanine 325. Serine 47 serves as a coordination point for Mg(2+). The interval 173-181 (DVLRSRVKT) is G2 motif. A Mg(2+)-binding site is contributed by threonine 181. The interval 196–205 (YRMFDVGGQR) is G3 motif. The tract at residues 265–272 (ILFLNKID) is G4 motif. Positions 323–328 (TCATDT) are G5 motif.

It belongs to the G-alpha family. G(q) subfamily. In terms of assembly, g proteins are composed of 3 units; alpha, beta and gamma. The alpha chain contains the guanine nucleotide binding site. Requires Mg(2+) as cofactor.

Guanine nucleotide-binding proteins (G proteins) are involved as modulators or transducers in various transmembrane signaling systems. The chain is Guanine nucleotide-binding protein subunit alpha (fadA) from Emericella nidulans (strain FGSC A4 / ATCC 38163 / CBS 112.46 / NRRL 194 / M139) (Aspergillus nidulans).